The chain runs to 200 residues: ATP synthase subunit s, mitochondrial (200 aa).

A mitochondrion-targeting transit peptide spans 1–25 (MMMFGKISRQLCSLKKIPWSCDSRY). The interval 1 to 61 (MMMFGKISRQ…SEWLLRCGAK (61 aa)) is N-terminal domain. Mg(2+) is bound at residue Gly-59. 4 LRR repeats span residues 62–87 (VRYC…RYKI), 88–116 (QAID…KITL), 117–141 (CKCH…KSLL), and 142–173 (ELEI…LSDL). Mg(2+) is bound at residue Thr-93.

Belongs to the ATP synthase subunit s family. As to quaternary structure, homotetramer. Associates with ATP synthase.

The protein localises to the mitochondrion. The protein resides in the mitochondrion inner membrane. In terms of biological role, involved in regulation of mitochondrial membrane ATP synthase. Necessary for H(+) conduction of ATP synthase. Facilitates energy-driven catalysis of ATP synthesis by blocking a proton leak through an alternative proton exit pathway. This is ATP synthase subunit s, mitochondrial (Dmac2l) from Mus musculus (Mouse).